Reading from the N-terminus, the 694-residue chain is Threonine--tRNA ligase (694 aa).

The region spanning 8–74 (NFVNTSVTTH…EETATFTAVP (67 aa)) is the TGS domain. A catalytic region spans residues 273 to 579 (DHRRLGTELD…LLEHYAGAFP (307 aa)). 3 residues coordinate Zn(2+): Cys-378, His-429, and His-556.

The protein belongs to the class-II aminoacyl-tRNA synthetase family. In terms of assembly, homodimer. The cofactor is Zn(2+).

Its subcellular location is the cytoplasm. The catalysed reaction is tRNA(Thr) + L-threonine + ATP = L-threonyl-tRNA(Thr) + AMP + diphosphate + H(+). Functionally, catalyzes the attachment of threonine to tRNA(Thr) in a two-step reaction: L-threonine is first activated by ATP to form Thr-AMP and then transferred to the acceptor end of tRNA(Thr). Also edits incorrectly charged L-seryl-tRNA(Thr). The sequence is that of Threonine--tRNA ligase from Corynebacterium efficiens (strain DSM 44549 / YS-314 / AJ 12310 / JCM 11189 / NBRC 100395).